We begin with the raw amino-acid sequence, 113 residues long: Iron-sulfur cluster assembly protein CyaY (113 aa).

This sequence belongs to the frataxin family.

Involved in iron-sulfur (Fe-S) cluster assembly. May act as a regulator of Fe-S biogenesis. The sequence is that of Iron-sulfur cluster assembly protein CyaY from Ralstonia nicotianae (strain ATCC BAA-1114 / GMI1000) (Ralstonia solanacearum).